Consider the following 88-residue polypeptide: Small ribosomal subunit protein uS15c (88 aa).

Belongs to the universal ribosomal protein uS15 family. In terms of assembly, part of the 30S ribosomal subunit.

The protein localises to the plastid. Its subcellular location is the chloroplast. The polypeptide is Small ribosomal subunit protein uS15c (rps15) (Angiopteris evecta (Mule's foot fern)).